Here is a 1152-residue protein sequence, read N- to C-terminus: Nucleolar protein 6 (1152 aa).

Disordered regions lie at residues 1-30 and 36-55; these read MPSA…DPEV and EGMD…EPPA. S65 is modified (phosphoserine). A coiled-coil region spans residues 92–128; it reads LLRLQVEELLKEVRLSEKKKERIDNFLKEVTKRIQKV. Phosphoserine is present on residues S292 and S817.

This sequence belongs to the NRAP family. In terms of assembly, part of the small subunit (SSU) processome, composed of more than 70 proteins and the RNA chaperone small nucleolar RNA (snoRNA) U3. Interacts with RRP7A; required for NOL6 localization to nucleolus. Ubiquitously expressed.

Its subcellular location is the nucleus. It is found in the nucleolus. It localises to the chromosome. In terms of biological role, part of the small subunit (SSU) processome, first precursor of the small eukaryotic ribosomal subunit. During the assembly of the SSU processome in the nucleolus, many ribosome biogenesis factors, an RNA chaperone and ribosomal proteins associate with the nascent pre-rRNA and work in concert to generate RNA folding, modifications, rearrangements and cleavage as well as targeted degradation of pre-ribosomal RNA by the RNA exosome. This Mus musculus (Mouse) protein is Nucleolar protein 6 (Nol6).